The sequence spans 645 residues: E3 ubiquitin-protein ligase ORTHRUS 2 (645 aa).

The PHD-type zinc-finger motif lies at 12–63; sequence DGVCMRCKSNPPPEESLTCGTCVTPWHVSCLSSPPKTLASTLQWHCPDCSGE. Residues 96–133 are disordered; that stretch reads LSTEEKAKMRQRLLSGKGVEEDDEEEKRKKKGKGKNPN. An RING-type 1 zinc finger spans residues 146–185; sequence CSFCMQLPERPVTKPCGHNACLKCFEKWMGQGKRTCGKCR. Residues 273-422 enclose the YDG domain; sequence VRNQGLLVGE…FKVCRYLFVR (150 aa). The segment at 518 to 575 adopts an RING-type 2 zinc-finger fold; it reads CQICQQVLTLPVTTPCAHNFCKACLEAKFAGKTLVRERSTGGRTLRSRKNVLNCPCCP. A coiled-coil region spans residues 583–613; that stretch reads QNPQVNREVAEVIEKLKTQEEDTAELEDEDE. Residues 599–645 are disordered; it reads KTQEEDTAELEDEDEGECSGTTPEEDSEQPKKRIKLDTDATVSATIR. The segment covering 603–625 has biased composition (acidic residues); it reads EDTAELEDEDEGECSGTTPEEDS. Positions 626-636 are enriched in basic and acidic residues; that stretch reads EQPKKRIKLDT.

Interacts with histones CENH3, HTB2, HTR3 and H4. As to expression, mostly expressed in inflorescence and, to a lower extent, in leaves.

The protein resides in the nucleus. It catalyses the reaction S-ubiquitinyl-[E2 ubiquitin-conjugating enzyme]-L-cysteine + [acceptor protein]-L-lysine = [E2 ubiquitin-conjugating enzyme]-L-cysteine + N(6)-ubiquitinyl-[acceptor protein]-L-lysine.. Its pathway is protein modification; protein ubiquitination. Its function is as follows. E3 ubiquitin-protein ligase. Participates in CpG methylation-dependent transcriptional regulation and epigenetic transcriptional silencing. Mediates ubiquitination with the E2 ubiquitin-conjugating enzyme UBC11. Promotes methylation-mediated gene silencing leading, for example, to early flowering. Associates with methylated DNA, and can bind to CpG, CpNpG, and CpNpN DNA motifs, with a strong preference for methylated forms, and with highest affinity for CpG substrate. Probably acts at the DNA methylation?histone interface to maintain centromeric heterochromatin. This chain is E3 ubiquitin-protein ligase ORTHRUS 2 (ORTH2), found in Arabidopsis thaliana (Mouse-ear cress).